The sequence spans 267 residues: Sulfur carrier protein FdhD (267 aa).

The active-site Cysteine persulfide intermediate is the Cys108.

It belongs to the FdhD family.

It localises to the cytoplasm. Functionally, required for formate dehydrogenase (FDH) activity. Acts as a sulfur carrier protein that transfers sulfur from IscS to the molybdenum cofactor prior to its insertion into FDH. The sequence is that of Sulfur carrier protein FdhD from Shouchella clausii (strain KSM-K16) (Alkalihalobacillus clausii).